A 127-amino-acid chain; its full sequence is Photosystem II reaction center Psb28 protein (127 aa).

The segment at 108-127 (LGYSQSQDSDQTEGADNQQA) is disordered. Polar residues predominate over residues 109–127 (GYSQSQDSDQTEGADNQQA).

This sequence belongs to the Psb28 family. As to quaternary structure, part of the photosystem II complex.

It localises to the cellular thylakoid membrane. This is Photosystem II reaction center Psb28 protein from Synechococcus sp. (strain CC9605).